Here is a 376-residue protein sequence, read N- to C-terminus: UDP-N-acetylglucosamine--N-acetylmuramyl-(pentapeptide) pyrophosphoryl-undecaprenol N-acetylglucosamine transferase (376 aa).

UDP-N-acetyl-alpha-D-glucosamine is bound by residues 11–13, asparagine 117, arginine 160, serine 208, and glutamine 310; that span reads TGG.

This sequence belongs to the glycosyltransferase 28 family. MurG subfamily.

The protein resides in the cell inner membrane. It catalyses the reaction di-trans,octa-cis-undecaprenyl diphospho-N-acetyl-alpha-D-muramoyl-L-alanyl-D-glutamyl-meso-2,6-diaminopimeloyl-D-alanyl-D-alanine + UDP-N-acetyl-alpha-D-glucosamine = di-trans,octa-cis-undecaprenyl diphospho-[N-acetyl-alpha-D-glucosaminyl-(1-&gt;4)]-N-acetyl-alpha-D-muramoyl-L-alanyl-D-glutamyl-meso-2,6-diaminopimeloyl-D-alanyl-D-alanine + UDP + H(+). It functions in the pathway cell wall biogenesis; peptidoglycan biosynthesis. Cell wall formation. Catalyzes the transfer of a GlcNAc subunit on undecaprenyl-pyrophosphoryl-MurNAc-pentapeptide (lipid intermediate I) to form undecaprenyl-pyrophosphoryl-MurNAc-(pentapeptide)GlcNAc (lipid intermediate II). This is UDP-N-acetylglucosamine--N-acetylmuramyl-(pentapeptide) pyrophosphoryl-undecaprenol N-acetylglucosamine transferase from Rickettsia conorii (strain ATCC VR-613 / Malish 7).